The sequence spans 248 residues: Pyridoxine 5'-phosphate synthase (248 aa).

Residue N9 coordinates 3-amino-2-oxopropyl phosphate. A 1-deoxy-D-xylulose 5-phosphate-binding site is contributed by 11-12 (DH). A 3-amino-2-oxopropyl phosphate-binding site is contributed by R20. The active-site Proton acceptor is H45. 1-deoxy-D-xylulose 5-phosphate-binding residues include R47 and H52. The active-site Proton acceptor is the E72. T102 is a binding site for 1-deoxy-D-xylulose 5-phosphate. H193 serves as the catalytic Proton donor. Residues G194 and 215–216 (GH) contribute to the 3-amino-2-oxopropyl phosphate site.

The protein belongs to the PNP synthase family. Homooctamer; tetramer of dimers.

It localises to the cytoplasm. The catalysed reaction is 3-amino-2-oxopropyl phosphate + 1-deoxy-D-xylulose 5-phosphate = pyridoxine 5'-phosphate + phosphate + 2 H2O + H(+). Its pathway is cofactor biosynthesis; pyridoxine 5'-phosphate biosynthesis; pyridoxine 5'-phosphate from D-erythrose 4-phosphate: step 5/5. Functionally, catalyzes the complicated ring closure reaction between the two acyclic compounds 1-deoxy-D-xylulose-5-phosphate (DXP) and 3-amino-2-oxopropyl phosphate (1-amino-acetone-3-phosphate or AAP) to form pyridoxine 5'-phosphate (PNP) and inorganic phosphate. This Hydrogenovibrio crunogenus (strain DSM 25203 / XCL-2) (Thiomicrospira crunogena) protein is Pyridoxine 5'-phosphate synthase.